The primary structure comprises 323 residues: tRNA dimethylallyltransferase (323 aa).

27 to 34 is a binding site for ATP; it reads GPTGSGKT. Residue 29–34 coordinates substrate; it reads TGSGKT. Interaction with substrate tRNA stretches follow at residues 52–55 and 176–180; these read DSRQ and QRIVR.

This sequence belongs to the IPP transferase family. Monomer. The cofactor is Mg(2+).

It catalyses the reaction adenosine(37) in tRNA + dimethylallyl diphosphate = N(6)-dimethylallyladenosine(37) in tRNA + diphosphate. In terms of biological role, catalyzes the transfer of a dimethylallyl group onto the adenine at position 37 in tRNAs that read codons beginning with uridine, leading to the formation of N6-(dimethylallyl)adenosine (i(6)A). The sequence is that of tRNA dimethylallyltransferase from Desulfovibrio desulfuricans (strain ATCC 27774 / DSM 6949 / MB).